A 70-amino-acid polypeptide reads, in one-letter code: Protein SlyX homolog (70 aa).

Belongs to the SlyX family.

The sequence is that of Protein SlyX homolog from Shewanella sp. (strain MR-7).